The sequence spans 227 residues: UPF0758 protein SSA_1218 (227 aa).

An MPN domain is found at 104 to 226; the sequence is QIMGSQKLAR…YYSYREETDM (123 aa). Residues histidine 175, histidine 177, and aspartate 188 each coordinate Zn(2+). Residues 175-188 carry the JAMM motif motif; it reads HNHPSGSVVPSRND.

This sequence belongs to the UPF0758 family.

In Streptococcus sanguinis (strain SK36), this protein is UPF0758 protein SSA_1218.